The sequence spans 213 residues: Adenylate kinase (213 aa).

Residue glycine 10 to threonine 15 participates in ATP binding. The NMP stretch occupies residues serine 30–isoleucine 59. Residues arginine 36, asparagine 57–isoleucine 59, glycine 83–arginine 86, and glutamine 90 contribute to the AMP site. The LID stretch occupies residues asparagine 125–aspartate 160. An ATP-binding site is contributed by arginine 126. Residues cysteine 129 and cysteine 132 each coordinate Zn(2+). An ATP-binding site is contributed by isoleucine 135–tyrosine 136. Zn(2+) contacts are provided by cysteine 146 and cysteine 149. Positions 157 and 169 each coordinate AMP. Leucine 195 is an ATP binding site.

This sequence belongs to the adenylate kinase family. As to quaternary structure, monomer.

It is found in the cytoplasm. The enzyme catalyses AMP + ATP = 2 ADP. It participates in purine metabolism; AMP biosynthesis via salvage pathway; AMP from ADP: step 1/1. Its function is as follows. Catalyzes the reversible transfer of the terminal phosphate group between ATP and AMP. Plays an important role in cellular energy homeostasis and in adenine nucleotide metabolism. The protein is Adenylate kinase of Wolbachia sp. subsp. Drosophila simulans (strain wRi).